The chain runs to 216 residues: Ribosomal RNA large subunit methyltransferase E (216 aa).

S-adenosyl-L-methionine contacts are provided by G71, W73, D88, D104, and D126. The active-site Proton acceptor is the K166.

It belongs to the class I-like SAM-binding methyltransferase superfamily. RNA methyltransferase RlmE family.

Its subcellular location is the cytoplasm. It carries out the reaction uridine(2552) in 23S rRNA + S-adenosyl-L-methionine = 2'-O-methyluridine(2552) in 23S rRNA + S-adenosyl-L-homocysteine + H(+). Its function is as follows. Specifically methylates the uridine in position 2552 of 23S rRNA at the 2'-O position of the ribose in the fully assembled 50S ribosomal subunit. In Wolbachia sp. subsp. Brugia malayi (strain TRS), this protein is Ribosomal RNA large subunit methyltransferase E.